Here is a 631-residue protein sequence, read N- to C-terminus: Plastidic ATP/ADP-transporter (631 aa).

The next 11 membrane-spanning stretches (helical) occupy residues 106-126, 149-169, 180-200, 238-258, 271-290, 313-333, 369-389, 407-427, 442-462, 465-485, and 543-563; these read IELV…CILF, IIPF…MLLY, ALFY…GFVL, LFYV…FWGF, FYPL…GRTV, GMMS…WWVN, LATL…TWKS, DFST…QWIF, VLLL…PLAP, AKFG…QNIF, and LASS…AWLG. The interval 586-631 is disordered; the sequence is ERASLKIPVVSQNENGNGPLSSESSLNPAGGDSTNASSEPSSPRSL. A compositionally biased stretch (polar residues) spans 595 to 631; it reads VSQNENGNGPLSSESSLNPAGGDSTNASSEPSSPRSL.

It belongs to the ADP/ATP translocase tlc (TC 2.A.12.2) family.

The protein resides in the plastid. It is found in the chloroplast membrane. The chain is Plastidic ATP/ADP-transporter from Solanum tuberosum (Potato).